Here is a 170-residue protein sequence, read N- to C-terminus: Adenine phosphoribosyltransferase (170 aa).

Belongs to the purine/pyrimidine phosphoribosyltransferase family. In terms of assembly, homodimer.

The protein resides in the cytoplasm. It carries out the reaction AMP + diphosphate = 5-phospho-alpha-D-ribose 1-diphosphate + adenine. Its pathway is purine metabolism; AMP biosynthesis via salvage pathway; AMP from adenine: step 1/1. In terms of biological role, catalyzes a salvage reaction resulting in the formation of AMP, that is energically less costly than de novo synthesis. This Trichodesmium erythraeum (strain IMS101) protein is Adenine phosphoribosyltransferase.